Here is a 159-residue protein sequence, read N- to C-terminus: Deoxyuridine 5'-triphosphate nucleotidohydrolase (159 aa).

Residues 78–80 (RSG), Asn91, 95–97 (LID), and Met105 contribute to the substrate site.

The protein belongs to the dUTPase family. Mg(2+) is required as a cofactor.

The enzyme catalyses dUTP + H2O = dUMP + diphosphate + H(+). It participates in pyrimidine metabolism; dUMP biosynthesis; dUMP from dCTP (dUTP route): step 2/2. Functionally, this enzyme is involved in nucleotide metabolism: it produces dUMP, the immediate precursor of thymidine nucleotides and it decreases the intracellular concentration of dUTP so that uracil cannot be incorporated into DNA. In Buchnera aphidicola subsp. Schizaphis graminum (strain Sg), this protein is Deoxyuridine 5'-triphosphate nucleotidohydrolase.